Consider the following 138-residue polypeptide: Protein FAM136A (138 aa).

N-acetylalanine is present on Ala-2. 2 positions are modified to phosphothreonine: Thr-124 and Thr-126.

This sequence belongs to the FAM136 family.

The sequence is that of Protein FAM136A (Fam136a) from Mus musculus (Mouse).